We begin with the raw amino-acid sequence, 225 residues long: 2-amino-5-formylamino-6-ribosylaminopyrimidin-4(3H)-one 5'-monophosphate deformylase (225 aa).

The Fe cation site is built by E28, H30, D39, and H107.

This sequence belongs to the creatininase superfamily. FAPy deformylase family. Homodimer. Requires Fe(2+) as cofactor. The cofactor is Zn(2+).

The catalysed reaction is 2-amino-5-formylamino-6-(5-phospho-D-ribosylamino)pyrimidin-4(3H)-one + H2O = 2,5-diamino-6-(1-D-ribosylamino)pyrimidin-4(3H)-one 5'-phosphate + formate + H(+). Its pathway is cofactor biosynthesis; coenzyme F420 biosynthesis. It participates in cofactor biosynthesis; riboflavin biosynthesis. Its function is as follows. Catalyzes the hydrolysis of the formamide of 2-amino-5-formylamino-6-ribosylamino-4(3H)-pyrimidinone 5'-monophosphate (FAPy) to form 2,5-diamino-6-ribosylamino-4(3H)-pyrimidinone 5'-phosphate (APy). This Methanocaldococcus sp. (strain FS406-22) protein is 2-amino-5-formylamino-6-ribosylaminopyrimidin-4(3H)-one 5'-monophosphate deformylase.